Here is a 246-residue protein sequence, read N- to C-terminus: Ribonuclease PH (246 aa).

Phosphate-binding positions include Arg91 and 129 to 131; that span reads GTR.

The protein belongs to the RNase PH family. Homohexameric ring arranged as a trimer of dimers.

The enzyme catalyses tRNA(n+1) + phosphate = tRNA(n) + a ribonucleoside 5'-diphosphate. Phosphorolytic 3'-5' exoribonuclease that plays an important role in tRNA 3'-end maturation. Removes nucleotide residues following the 3'-CCA terminus of tRNAs; can also add nucleotides to the ends of RNA molecules by using nucleoside diphosphates as substrates, but this may not be physiologically important. Probably plays a role in initiation of 16S rRNA degradation (leading to ribosome degradation) during starvation. The sequence is that of Ribonuclease PH from Burkholderia ambifaria (strain MC40-6).